A 445-amino-acid chain; its full sequence is 23S rRNA (uracil(1939)-C(5))-methyltransferase RlmD (445 aa).

In terms of domain architecture, TRAM spans 6–64; that stretch reads RRLPREPFEIAITGLSHEGRGIAHHDERTLFVHGALPGERVRAVYTKRRRSVAEARVVE. 4 residues coordinate [4Fe-4S] cluster: C77, C83, C86, and C165. S-adenosyl-L-methionine contacts are provided by Q274, F303, N308, E324, D351, and D372. C398 acts as the Nucleophile in catalysis.

The protein belongs to the class I-like SAM-binding methyltransferase superfamily. RNA M5U methyltransferase family. RlmD subfamily.

The catalysed reaction is uridine(1939) in 23S rRNA + S-adenosyl-L-methionine = 5-methyluridine(1939) in 23S rRNA + S-adenosyl-L-homocysteine + H(+). In terms of biological role, catalyzes the formation of 5-methyl-uridine at position 1939 (m5U1939) in 23S rRNA. The sequence is that of 23S rRNA (uracil(1939)-C(5))-methyltransferase RlmD from Alkalilimnicola ehrlichii (strain ATCC BAA-1101 / DSM 17681 / MLHE-1).